Reading from the N-terminus, the 403-residue chain is Phosphopentomutase (403 aa).

Mn(2+)-binding residues include Asp13, Asp298, His303, Asp339, His340, and His351.

This sequence belongs to the phosphopentomutase family. It depends on Mn(2+) as a cofactor.

It is found in the cytoplasm. The catalysed reaction is 2-deoxy-alpha-D-ribose 1-phosphate = 2-deoxy-D-ribose 5-phosphate. It carries out the reaction alpha-D-ribose 1-phosphate = D-ribose 5-phosphate. It participates in carbohydrate degradation; 2-deoxy-D-ribose 1-phosphate degradation; D-glyceraldehyde 3-phosphate and acetaldehyde from 2-deoxy-alpha-D-ribose 1-phosphate: step 1/2. Its function is as follows. Isomerase that catalyzes the conversion of deoxy-ribose 1-phosphate (dRib-1-P) and ribose 1-phosphate (Rib-1-P) to deoxy-ribose 5-phosphate (dRib-5-P) and ribose 5-phosphate (Rib-5-P), respectively. The chain is Phosphopentomutase from Streptococcus thermophilus (strain ATCC BAA-491 / LMD-9).